Reading from the N-terminus, the 65-residue chain is Putative beta-neurotoxin RjAa2 (65 aa).

One can recognise an LCN-type CS-alpha/beta domain in the interval lysine 1–glycine 64. 4 cysteine pairs are disulfide-bonded: cysteine 11–cysteine 63, cysteine 15–cysteine 37, cysteine 22–cysteine 44, and cysteine 26–cysteine 46.

This sequence belongs to the long (4 C-C) scorpion toxin superfamily. Sodium channel inhibitor family. Beta subfamily. Expressed by the venom gland.

It localises to the secreted. In terms of biological role, beta toxins bind voltage-independently at site-4 of sodium channels (Nav) and shift the voltage of activation toward more negative potentials thereby affecting sodium channel activation and promoting spontaneous and repetitive firing. The protein is Putative beta-neurotoxin RjAa2 of Rhopalurus junceus (Caribbean blue scorpion).